The primary structure comprises 150 residues: MTTTTLDIHQILKLLPHRYPFLLVDRVLDMEKGKRITALKNVTMNEPFFNGHFPHRPVMPGVLMLEAMAQAAALLSFHSLDIVPDDNTVYYFAAIDGARFKRPVEPGDQLTLEVEIERMKAGISKFKGRALVGSELACEATLMCAMRQIN.

Histidine 52 is a catalytic residue.

This sequence belongs to the thioester dehydratase family. FabZ subfamily.

The protein localises to the cytoplasm. The enzyme catalyses a (3R)-hydroxyacyl-[ACP] = a (2E)-enoyl-[ACP] + H2O. Involved in unsaturated fatty acids biosynthesis. Catalyzes the dehydration of short chain beta-hydroxyacyl-ACPs and long chain saturated and unsaturated beta-hydroxyacyl-ACPs. This is 3-hydroxyacyl-[acyl-carrier-protein] dehydratase FabZ from Variovorax paradoxus (strain S110).